The chain runs to 597 residues: Elongation factor 4 (597 aa).

A tr-type G domain is found at 2–184; that stretch reads KNIRNFSIIA…RLVRDIPAPE (183 aa). Residues 14 to 19 and 131 to 134 contribute to the GTP site; these read DHGKST and NKID.

The protein belongs to the TRAFAC class translation factor GTPase superfamily. Classic translation factor GTPase family. LepA subfamily.

The protein resides in the cell inner membrane. The enzyme catalyses GTP + H2O = GDP + phosphate + H(+). Required for accurate and efficient protein synthesis under certain stress conditions. May act as a fidelity factor of the translation reaction, by catalyzing a one-codon backward translocation of tRNAs on improperly translocated ribosomes. Back-translocation proceeds from a post-translocation (POST) complex to a pre-translocation (PRE) complex, thus giving elongation factor G a second chance to translocate the tRNAs correctly. Binds to ribosomes in a GTP-dependent manner. The protein is Elongation factor 4 of Edwardsiella ictaluri (strain 93-146).